A 627-amino-acid polypeptide reads, in one-letter code: Pentatricopeptide repeat-containing protein At2g15630, mitochondrial (627 aa).

The transit peptide at 1 to 29 (MRRFTVPCILRHRISILSGAGYSPAAARL) directs the protein to the mitochondrion. 13 PPR repeats span residues 154-188 (STILFDLLVRCCCQLRMVDEAIECFYLMKEKGFYP), 189-223 (KTETCNHILTLLSRLNRIENAWVFYADMYRMEIKS), 224-258 (NVYTFNIMINVLCKEGKLKKAKGFLGIMEVFGIKP), 259-293 (TIVTYNTLVQGFSLRGRIEGARLIISEMKSKGFQP), 294-324 (DMQTYNPILSWMCNEGRASEVLREMKEIGLV), 326-360 (DSVSYNILIRGCSNNGDLEMAFAYRDEMVKQGMVP), 361-395 (TFYTYNTLIHGLFMENKIEAAEILIREIREKGIVL), 396-430 (DSVTYNILINGYCQHGDAKKAFALHDEMMTDGIQP), 431-465 (TQFTYTSLIYVLCRKNKTREADELFEKVVGKGMKP), 466-500 (DLVMMNTLMDGHCAIGNMDRAFSLLKEMDMMSINP), 501-535 (DDVTYNCLMRGLCGEGKFEEARELMGEMKRRGIKP), 536-570 (DHISYNTLISGYSKKGDTKHAFMVRDEMLSLGFNP), and 571-605 (TLLTYNALLKGLSKNQEGELAEELLREMKSEGIVP).

Belongs to the PPR family. P subfamily.

It is found in the mitochondrion. In Arabidopsis thaliana (Mouse-ear cress), this protein is Pentatricopeptide repeat-containing protein At2g15630, mitochondrial.